The chain runs to 414 residues: Probable elongation factor 1-gamma 1 (414 aa).

The GST N-terminal domain maps to 1 to 82; that stretch reads MALVLHTYKG…YVSRLNGDNS (82 aa). In terms of domain architecture, GST C-terminal spans 87 to 215; it reads SLIEYAQIEQ…VKQTEAVPPI (129 aa). Positions 214-224 are enriched in low complexity; the sequence is PIASKKAAQPA. The interval 214 to 260 is disordered; the sequence is PIASKKAAQPAKPKEEPKKKEAPVAEAPKLAEEEEAPKPKAKNPLDL. Residues 225–236 show a composition bias toward basic and acidic residues; that stretch reads KPKEEPKKKEAP. The EF-1-gamma C-terminal domain maps to 254 to 414; the sequence is AKNPLDLLPP…EALLDAKCFK (161 aa).

In terms of assembly, EF-1 is composed of four subunits: alpha, beta, delta, and gamma.

Functionally, probably plays a role in anchoring the complex to other cellular components. This Arabidopsis thaliana (Mouse-ear cress) protein is Probable elongation factor 1-gamma 1.